Consider the following 1397-residue polypeptide: DNA-directed RNA polymerase subunit beta' (1397 aa).

Positions 75, 77, 90, and 93 each coordinate Zn(2+). 3 residues coordinate Mg(2+): aspartate 465, aspartate 467, and aspartate 469. Zn(2+) contacts are provided by cysteine 819, cysteine 893, cysteine 900, and cysteine 903.

It belongs to the RNA polymerase beta' chain family. In terms of assembly, the RNAP catalytic core consists of 2 alpha, 1 beta, 1 beta' and 1 omega subunit. When a sigma factor is associated with the core the holoenzyme is formed, which can initiate transcription. Requires Mg(2+) as cofactor. Zn(2+) serves as cofactor.

It catalyses the reaction RNA(n) + a ribonucleoside 5'-triphosphate = RNA(n+1) + diphosphate. In terms of biological role, DNA-dependent RNA polymerase catalyzes the transcription of DNA into RNA using the four ribonucleoside triphosphates as substrates. In Acinetobacter baylyi (strain ATCC 33305 / BD413 / ADP1), this protein is DNA-directed RNA polymerase subunit beta'.